The following is a 349-amino-acid chain: Ferredoxin--NADP reductase (349 aa).

7 residues coordinate FAD: Asp43, Gln51, Tyr56, Val96, Phe131, Asp295, and Ser336.

It belongs to the ferredoxin--NADP reductase type 2 family. As to quaternary structure, homodimer. Requires FAD as cofactor.

It carries out the reaction 2 reduced [2Fe-2S]-[ferredoxin] + NADP(+) + H(+) = 2 oxidized [2Fe-2S]-[ferredoxin] + NADPH. This chain is Ferredoxin--NADP reductase, found in Paraburkholderia phytofirmans (strain DSM 17436 / LMG 22146 / PsJN) (Burkholderia phytofirmans).